Reading from the N-terminus, the 145-residue chain is Peptide methionine sulfoxide reductase MsrB (145 aa).

Residues 4 to 127 enclose the MsrB domain; it reads SEELKQRIGD…NSAALKFIPY (124 aa). C116 acts as the Nucleophile in catalysis.

Belongs to the MsrB Met sulfoxide reductase family.

It carries out the reaction L-methionyl-[protein] + [thioredoxin]-disulfide + H2O = L-methionyl-(R)-S-oxide-[protein] + [thioredoxin]-dithiol. The sequence is that of Peptide methionine sulfoxide reductase MsrB from Streptococcus pyogenes serotype M6 (strain ATCC BAA-946 / MGAS10394).